Reading from the N-terminus, the 79-residue chain is D-alanyl carrier protein (79 aa).

Positions 1-77 constitute a Carrier domain; sequence MDVKAEVIEI…KIVEGVTELR (77 aa). Serine 35 carries the O-(pantetheine 4'-phosphoryl)serine modification.

It belongs to the DltC family. Post-translationally, 4'-phosphopantetheine is transferred from CoA to a specific serine of apo-DCP.

Its subcellular location is the cytoplasm. Its pathway is cell wall biogenesis; lipoteichoic acid biosynthesis. Its function is as follows. Carrier protein involved in the D-alanylation of lipoteichoic acid (LTA). The loading of thioester-linked D-alanine onto DltC is catalyzed by D-alanine--D-alanyl carrier protein ligase DltA. The DltC-carried D-alanyl group is further transferred to cell membrane phosphatidylglycerol (PG) by forming an ester bond, probably catalyzed by DltD. D-alanylation of LTA plays an important role in modulating the properties of the cell wall in Gram-positive bacteria, influencing the net charge of the cell wall. The chain is D-alanyl carrier protein from Streptococcus thermophilus (strain CNRZ 1066).